A 408-amino-acid polypeptide reads, in one-letter code: Probable 2,3-bisphosphoglycerate-independent phosphoglycerate mutase (408 aa).

It belongs to the BPG-independent phosphoglycerate mutase family. A-PGAM subfamily.

The enzyme catalyses (2R)-2-phosphoglycerate = (2R)-3-phosphoglycerate. The protein operates within carbohydrate degradation; glycolysis; pyruvate from D-glyceraldehyde 3-phosphate: step 3/5. Its function is as follows. Catalyzes the interconversion of 2-phosphoglycerate and 3-phosphoglycerate. The protein is Probable 2,3-bisphosphoglycerate-independent phosphoglycerate mutase of Deinococcus geothermalis (strain DSM 11300 / CIP 105573 / AG-3a).